The sequence spans 2112 residues: Phenolphthiocerol synthesis polyketide synthase type I Pks15/1 (2112 aa).

One can recognise a Ketosynthase family 3 (KS3) domain in the interval 46–469 (TEPVAVVGIG…GTNAHLILEE (424 aa)). Catalysis depends on for beta-ketoacyl synthase activity residues cysteine 216, histidine 351, and histidine 391. Residues 579–893 (TVVVFPGQGA…GQVFTTGVPV (315 aa)) form an acyltransferase region. Residue serine 670 is the For acyltransferase activity of the active site. The tract at residues 941-1063 (HALLGAVVER…GMLGVAAAET (123 aa)) is N-terminal hotdog fold. The segment at 941 to 1101 (HALLGAVVER…YAYGPAFQGL (161 aa)) is dehydratase. In terms of domain architecture, PKS/mFAS DH spans 941–1215 (HALLGAVVER…TRPITAEQLR (275 aa)). Histidine 973 (proton acceptor; for dehydratase activity) is an active-site residue. The interval 1075 to 1215 (AESVDISDGY…TRPITAEQLR (141 aa)) is C-terminal hotdog fold. The Proton donor; for dehydratase activity role is filled by aspartate 1136. Residues 1406 to 1711 (GTLEDLVIQP…QARHIGKVVL (306 aa)) are enoylreductase. Residues 1536–1553 (VLIH…VQLA) and 1725–1740 (TVVI…GVLA) contribute to the NADP(+) site. The interval 1724–1905 (GTVVITGATG…SLAWGLWEQP (182 aa)) is beta-ketoacyl reductase. A Carrier domain is found at 2010-2085 (ELLVGLVCLQ…AVAEYVAQQM (76 aa)). At serine 2045 the chain carries O-(pantetheine 4'-phosphoryl)serine. The segment covering 2084-2100 (QMSGSRPTESGDPTSQV) has biased composition (polar residues). Positions 2084–2112 (QMSGSRPTESGDPTSQVVEPAAAEVSVHA) are disordered.

The protein belongs to the thiolase-like superfamily. Beta-ketoacyl-ACP synthases family. Pantetheine 4'-phosphate is required as a cofactor.

It carries out the reaction a fatty acyl-[ACP] + malonyl-[ACP] + H(+) = a 3-oxoacyl-[ACP] + holo-[ACP] + CO2. Its pathway is lipid metabolism; fatty acid biosynthesis. Its function is as follows. Catalyzes the elongation by iterative transfer of p-hydroxybenzoyl group from FadD22 (pHBA-S-FAdD22) to form p-hydroxyphenylalkanoate (pHPA) intermediates during phenolphthiocerol (PPOL) biosynthesis. PPOL is an important intermediate in the biosynthesis of phenolic glycolipid (mycosid B). This is Phenolphthiocerol synthesis polyketide synthase type I Pks15/1 (pks15/1) from Mycobacterium bovis (strain ATCC BAA-935 / AF2122/97).